The sequence spans 185 residues: Small ribosomal subunit protein uS5c (185 aa).

In terms of domain architecture, S5 DRBM spans 26-89 (FVERLIKISR…ADGRKNLIKI (64 aa)).

It belongs to the universal ribosomal protein uS5 family. Part of the 30S ribosomal subunit. Contacts protein S4.

The protein localises to the plastid. It is found in the chloroplast. With S4 and S12 plays an important role in translational accuracy. The sequence is that of Small ribosomal subunit protein uS5c (rps5) from Trieres chinensis (Marine centric diatom).